Reading from the N-terminus, the 295-residue chain is Spermatogenesis-associated protein 4 (295 aa).

The interval Met1–Lys34 is disordered. Positions Ser48 to Gln154 constitute a Calponin-homology (CH) domain. Residues Lys251 to Leu295 are disordered. Residues Ser270–Val282 show a composition bias toward basic and acidic residues. Residues Gln284–Leu295 are compositionally biased toward polar residues.

As to expression, testis.

The protein localises to the nucleus. In terms of biological role, may play a role in apoptosis regulation. This Mus musculus (Mouse) protein is Spermatogenesis-associated protein 4 (Spata4).